Consider the following 109-residue polypeptide: Non-structural protein of 12.7 kDa (109 aa).

It belongs to the coronaviruses ns12.7 protein family.

In Sus scrofa (Pig), this protein is Non-structural protein of 12.7 kDa.